The sequence spans 160 residues: UPF0178 protein BPP1051 (160 aa).

Belongs to the UPF0178 family.

The chain is UPF0178 protein BPP1051 from Bordetella parapertussis (strain 12822 / ATCC BAA-587 / NCTC 13253).